A 247-amino-acid polypeptide reads, in one-letter code: MKFIIAPAKKMIRAQDDFPVQSQPKFRVQAGELLLLMQQLTFSEAQALWHTSDKLTQTAYNQLQQSDLTRQQSPAIFSYSGIQYQYMAPDLLDDAGLVYIQQHLRILSGLYGILRPFDGVVPYRLEMQNHLPLPHHRNLYDFWGNRLYQALARMPGPIINLASDEYAKAIRPYLQAKDQFIDVRFAHRVNGQLKTRATYAKMARGEMIRFAASHRLTKAADLKNFDSPTYRFNAHLSTATQLVFIAK.

Belongs to the UPF0246 family.

This is UPF0246 protein LCABL_22600 from Lacticaseibacillus casei (strain BL23) (Lactobacillus casei).